We begin with the raw amino-acid sequence, 67 residues long: LPS-assembly lipoprotein LptM (67 aa).

Residues 1-19 form the signal peptide; that stretch reads MKNVFKTLAVLLTLFSLTG. Cys-20 carries the N-palmitoyl cysteine lipid modification. Residue Cys-20 is the site of S-diacylglycerol cysteine attachment. Positions 26-67 are disordered; it reads LYFPPADKNAPPPTKKVDSQTQSTMPDKNDRATGDGPSQVNY.

Belongs to the LptM family. As to quaternary structure, interacts with the outer membrane embedded portion of the LPS translocon formed by LptD and LptE (LptDE).

Its subcellular location is the cell outer membrane. Functionally, component of the lipopolysaccharide (LPS) transport (Lpt) pathway that promotes efficient assembly of the outer membrane LPS translocon (LptDE) by the BAM complex. Facilitates oxidative maturation of LptD by stabilizing a conformation of the LPS translocon in which LptD can efficiently acquire native disulfide bonds, thereby activating the LPS translocon. In Salmonella typhi, this protein is LPS-assembly lipoprotein LptM.